The sequence spans 474 residues: L-arabinose isomerase (474 aa).

Residues Glu306, Glu331, His348, and His447 each contribute to the Mn(2+) site.

The protein belongs to the arabinose isomerase family. Requires Mn(2+) as cofactor.

It carries out the reaction beta-L-arabinopyranose = L-ribulose. The protein operates within carbohydrate degradation; L-arabinose degradation via L-ribulose; D-xylulose 5-phosphate from L-arabinose (bacterial route): step 1/3. Functionally, catalyzes the conversion of L-arabinose to L-ribulose. The chain is L-arabinose isomerase from Levilactobacillus brevis (strain ATCC 367 / BCRC 12310 / CIP 105137 / JCM 1170 / LMG 11437 / NCIMB 947 / NCTC 947) (Lactobacillus brevis).